Here is a 420-residue protein sequence, read N- to C-terminus: Transcription activator GLK1 (420 aa).

Residues 74–152 (GDFSNHMNAS…NRISNNEGKR (79 aa)) are disordered. The segment covering 106–117 (KGEEVVSKRDDV) has biased composition (basic and acidic residues). Over residues 135–147 (SSSASSKNNRISN) the composition is skewed to low complexity. Positions 150-209 (GKRKVKVDWTPELHRRFVEAVEQLGVDKAVPSRILELMGVHCLTRHNVASHLQKYRSHRK) form a DNA-binding region, myb-like GARP.

Interacts with NAC92. In terms of tissue distribution, expressed in rosette and cauline leaves. Expressed at low levels in cotyledons and shoots.

The protein localises to the nucleus. In terms of biological role, transcriptional activator that functions with GLK2 to promote chloroplast development. Acts as an activator of nuclear photosynthetic genes involved in chlorophyll biosynthesis, light harvesting, and electron transport. Acts in a cell-autonomous manner to coordinate and maintain the photosynthetic apparatus within individual cells. May function in photosynthetic capacity optimization by integrating responses to variable environmental and endogenous cues. Prevents premature senescence. The sequence is that of Transcription activator GLK1 (GLK1) from Arabidopsis thaliana (Mouse-ear cress).